The sequence spans 359 residues: Peptide chain release factor 1 (359 aa).

Position 236 is an N5-methylglutamine (Q236).

It belongs to the prokaryotic/mitochondrial release factor family. In terms of processing, methylated by PrmC. Methylation increases the termination efficiency of RF1.

The protein resides in the cytoplasm. In terms of biological role, peptide chain release factor 1 directs the termination of translation in response to the peptide chain termination codons UAG and UAA. The chain is Peptide chain release factor 1 from Streptococcus pyogenes serotype M6 (strain ATCC BAA-946 / MGAS10394).